The sequence spans 493 residues: Angiopoietin-related protein 2 (493 aa).

A signal peptide spans 1–19 (MRPLCMTYWWLGLLATVGA). Coiled-coil stretches lie at residues 77–115 (EVHL…VDGG) and 152–202 (ALEL…QLEE). Asn164 and Asn192 each carry an N-linked (GlcNAc...) asparagine glycan. Residues 269–489 (DKPSGPWRDC…KVVMMIRPNP (221 aa)) enclose the Fibrinogen C-terminal domain. Intrachain disulfides connect Cys278–Cys307 and Cys430–Cys443.

Widely expressed in heart, tongue, lung and skeletal muscle. Also found in lower levels in kidney, epididymis and testis.

Its subcellular location is the secreted. In terms of biological role, induces sprouting in endothelial cells through an autocrine and paracrine action. This Mus musculus (Mouse) protein is Angiopoietin-related protein 2 (Angptl2).